Reading from the N-terminus, the 236-residue chain is Probable transcriptional regulatory protein UU295 (236 aa).

The protein belongs to the TACO1 family.

The protein resides in the cytoplasm. This Ureaplasma parvum serovar 3 (strain ATCC 700970) protein is Probable transcriptional regulatory protein UU295.